Reading from the N-terminus, the 468-residue chain is Protein NEN1 (468 aa).

Residues 11–172 (FFDVETTVPK…DDVRMNLEVL (162 aa)) enclose the Exonuclease domain. Mg(2+)-binding residues include aspartate 13 and glutamate 15. Residue histidine 159 is the Proton donor/acceptor of the active site. Aspartate 164 provides a ligand contact to Mg(2+).

It depends on Mg(2+) as a cofactor. Expressed in the sieve elements and phloem pole pericycle cells.

It is found in the cytoplasm. The protein resides in the nucleus. Probable exonuclease involved in enuclation of sieve elements. The polypeptide is Protein NEN1 (Arabidopsis thaliana (Mouse-ear cress)).